A 46-amino-acid chain; its full sequence is Large ribosomal subunit protein bL36 (46 aa).

It belongs to the bacterial ribosomal protein bL36 family.

This Photorhabdus laumondii subsp. laumondii (strain DSM 15139 / CIP 105565 / TT01) (Photorhabdus luminescens subsp. laumondii) protein is Large ribosomal subunit protein bL36.